The primary structure comprises 117 residues: Hainantoxin-XV-4 (117 aa).

An N-terminal signal peptide occupies residues 1–20; sequence MKLCAVIIASLLVCVAVASS. Residues 20 to 55 form a disordered region; that stretch reads SSDNQKEFAQEKEMTREETQSLGEHEKDDEVTGSEE. The propeptide occupies 21-56; the sequence is SDNQKEFAQEKEMTREETQSLGEHEKDDEVTGSEER. Residues 23 to 55 are compositionally biased toward basic and acidic residues; that stretch reads NQKEFAQEKEMTREETQSLGEHEKDDEVTGSEE. Cystine bridges form between cysteine 58–cysteine 72, cysteine 65–cysteine 78, cysteine 69–cysteine 115, and cysteine 71–cysteine 91.

This sequence belongs to the neurotoxin 03 (Tx2) family. 02 subfamily. HNTX-XV sub-subfamily. Expressed by the venom gland.

It localises to the secreted. Functionally, putative ion channel inhibitor. The chain is Hainantoxin-XV-4 from Cyriopagopus hainanus (Chinese bird spider).